A 523-amino-acid polypeptide reads, in one-letter code: Cytoplasmic dynein 1 light intermediate chain 1 (523 aa).

The tract at residues 1–25 is disordered; that stretch reads MAAVGRVGSFGSSPPGLASTYASGP. 74–81 is an ATP binding site; the sequence is GEDGAGKT. Disordered stretches follow at residues 200-219, 387-434, and 457-523; these read PGED…QEDR, PPTA…DPNM, and GSPG…GEAS. A Phosphoserine modification is found at S207. Position 213 is a phosphothreonine (T213). Phosphoserine occurs at positions 398 and 405. Phosphothreonine is present on T408. 4 positions are modified to phosphoserine: S412, S419, S421, and S427. A compositionally biased stretch (low complexity) spans 412–421; sequence SVSSNVASVS. Gly residues predominate over residues 458-473; it reads SPGGPGVGGSPGGGAA. Residues 474–485 show a composition bias toward low complexity; it reads GASPSLPPSAKK. Residues S486 and S510 each carry the phosphoserine modification. Positions 506–523 are enriched in low complexity; sequence PASVSPTTPTSPTEGEAS. T512, T513, and T515 each carry phosphothreonine. S516 is modified (phosphoserine).

The protein belongs to the dynein light intermediate chain family. In terms of assembly, homodimer. The cytoplasmic dynein 1 complex consists of two catalytic heavy chains (HCs) and a number of non-catalytic subunits presented by intermediate chains (ICs), light intermediate chains (LICs) and light chains (LCs); the composition seems to vary in respect to the IC, LIC and LC composition. The heavy chain homodimer serves as a scaffold for the probable homodimeric assembly of the respective non-catalytic subunits. The ICs and LICs bind directly to the HC dimer and the LCs assemble on the IC dimer. Self-associates. Interacts with DYNC1H1; DYNC1LI1 and DYNC1LI2 bind mutually exclusive to DYNC1H1. Interacts with PCNT. Forms a complex with RAB11FIP3 and RAB11A1; the interaction between DYNC1LI1 and RAB11FIP3 is direct and induces DYNC1LI1 localization onto endosomal membrane; the complex regulates endocytic trafficking. Interacts with RUFY3. Phosphorylated during mitosis but not in interphase.

It localises to the cytoplasm. The protein resides in the chromosome. The protein localises to the centromere. It is found in the kinetochore. Its subcellular location is the cytoskeleton. It localises to the spindle pole. The protein resides in the recycling endosome membrane. Its function is as follows. Acts as one of several non-catalytic accessory components of the cytoplasmic dynein 1 complex that are thought to be involved in linking dynein to cargos and to adapter proteins that regulate dynein function. Cytoplasmic dynein 1 acts as a motor for the intracellular retrograde motility of vesicles and organelles along microtubules. May play a role in binding dynein to membranous organelles or chromosomes. Probably involved in the microtubule-dependent transport of pericentrin. Is required for progress through the spindle assembly checkpoint. The phosphorylated form appears to be involved in the selective removal of MAD1L1 and MAD1L2 but not BUB1B from kinetochores. Forms a functional Rab11/RAB11FIP3/dynein complex onto endosomal membrane that regulates the movement of peripheral sorting endosomes (SE) along microtubule tracks toward the microtubule organizing center/centrosome, generating the endosomal recycling compartment (ERC). This chain is Cytoplasmic dynein 1 light intermediate chain 1 (Dync1li1), found in Mus musculus (Mouse).